A 187-amino-acid chain; its full sequence is Adenylate kinase (187 aa).

10-15 (GSGKGT) serves as a coordination point for ATP. An NMP region spans residues 30 to 59 (STGDMLRAEIAAGSELGKQAKAVMDAGNLV). Residues Thr31, Arg36, 57-59 (NLV), 85-88 (GYPR), and Gln92 contribute to the AMP site. The tract at residues 126-136 (GRAKEQGRADD) is LID. Arg127 lines the ATP pocket. Positions 133 and 144 each coordinate AMP. An ATP-binding site is contributed by Gly172.

Belongs to the adenylate kinase family. In terms of assembly, monomer.

It localises to the cytoplasm. It catalyses the reaction AMP + ATP = 2 ADP. Its pathway is purine metabolism; AMP biosynthesis via salvage pathway; AMP from ADP: step 1/1. Functionally, catalyzes the reversible transfer of the terminal phosphate group between ATP and AMP. Plays an important role in cellular energy homeostasis and in adenine nucleotide metabolism. The chain is Adenylate kinase from Stenotrophomonas maltophilia (strain R551-3).